We begin with the raw amino-acid sequence, 268 residues long: Trans-aconitate 2-methyltransferase (268 aa).

It belongs to the methyltransferase superfamily. Tam family.

Its subcellular location is the cytoplasm. It catalyses the reaction trans-aconitate + S-adenosyl-L-methionine = (E)-3-(methoxycarbonyl)pent-2-enedioate + S-adenosyl-L-homocysteine. In terms of biological role, catalyzes the S-adenosylmethionine monomethyl esterification of trans-aconitate. The protein is Trans-aconitate 2-methyltransferase of Delftia acidovorans (strain DSM 14801 / SPH-1).